A 136-amino-acid polypeptide reads, in one-letter code: 2-hydroxyisobutanoyl-CoA mutase small subunit (136 aa).

Positions 5 to 133 (PIRVLLAKVG…DSIRSLVAAR (129 aa)) constitute a B12-binding domain. His-18 contacts adenosylcob(III)alamin.

This sequence belongs to the acyl-CoA mutase small subunit family. Homotetramer composed of two large substrate-binding subunits (HcmA) and two small cobalamin-binding subunits (HcmB). Adenosylcob(III)alamin is required as a cofactor.

It carries out the reaction 2-hydroxyisobutanoyl-CoA = (3S)-3-hydroxybutanoyl-CoA. Its function is as follows. Together with HcmA, catalyzes the isomerization of 2-hydroxyisobutyryl-CoA and 3-hydroxybutyryl-CoA. Is specific for 2-hydroxyisobutyryl-CoA and (S)-3-hydroxybutyryl-CoA, and shows only very low activity with (R)-3-hydroxybutyryl-CoA, isobutyryl-CoA and butyryl-CoA. In vitro, can isomerize pivalyl-CoA and isovaleryl-CoA, with much lower efficiency. Plays a central role in the degradation of substrates bearing a tert-butyl moiety, such as the fuel oxygenate methyl tert-butyl ether (MTBE) and its metabolites. The chain is 2-hydroxyisobutanoyl-CoA mutase small subunit from Aquincola tertiaricarbonis.